Here is a 500-residue protein sequence, read N- to C-terminus: Probable cytosol aminopeptidase (500 aa).

The Mn(2+) site is built by lysine 268 and aspartate 273. Lysine 280 is an active-site residue. Residues aspartate 291, aspartate 350, and glutamate 352 each coordinate Mn(2+). Arginine 354 is an active-site residue.

The protein belongs to the peptidase M17 family. Requires Mn(2+) as cofactor.

It localises to the cytoplasm. It carries out the reaction Release of an N-terminal amino acid, Xaa-|-Yaa-, in which Xaa is preferably Leu, but may be other amino acids including Pro although not Arg or Lys, and Yaa may be Pro. Amino acid amides and methyl esters are also readily hydrolyzed, but rates on arylamides are exceedingly low.. It catalyses the reaction Release of an N-terminal amino acid, preferentially leucine, but not glutamic or aspartic acids.. In terms of biological role, presumably involved in the processing and regular turnover of intracellular proteins. Catalyzes the removal of unsubstituted N-terminal amino acids from various peptides. The sequence is that of Probable cytosol aminopeptidase from Baumannia cicadellinicola subsp. Homalodisca coagulata.